Reading from the N-terminus, the 1693-residue chain is 1-phosphatidylinositol 4,5-bisphosphate phosphodiesterase eta-1 (1693 aa).

The PH domain maps to 20–128 (SVMQSGTQMI…WITGLKYLMA (109 aa)). 3 consecutive EF-hand domains span residues 142–177 (THDQWVKQTFEEADKNGDGLLNIEEIHQLMHKLNVN), 178–214 (LPRRKVRQMFQEADTDENQGTLTFEEFCVFYKMMSLR), and 226–246 (DKKDHLTVEELAQFLKVEQKM). Ca(2+) contacts are provided by Asp155, Asn157, Asp159, and Glu166. Residues 299–444 (QDMDQPLCNY…LKGKILVKGK (146 aa)) enclose the PI-PLC X-box domain. Residue His314 is part of the active site. Residues Asn315, Glu344, and Asp346 each contribute to the Ca(2+) site. Residue His358 is part of the active site. Glu393 provides a ligand contact to Ca(2+). Substrate is bound by residues Lys442 and Lys444. Residues 526–585 (LNAHLKQSPDVKESGKKSHGRSLMTNFGKHKKTTKSRSKSYSTDDEEDTQQSTGKEGGQL) form a disordered region. A compositionally biased stretch (basic and acidic residues) spans 532–541 (QSPDVKESGK). A compositionally biased stretch (basic residues) spans 553 to 563 (GKHKKTTKSRS). The region spanning 601–714 (LSDLVVYTNS…GYVLKPQQMC (114 aa)) is the PI-PLC Y-box domain. Substrate-binding residues include Ser627 and Arg654. Residues 715–843 (KGTFNPFSGD…PGYRHVYLEG (129 aa)) form the C2 domain. 6 residues coordinate Ca(2+): Ile758, Asp760, Asp784, Asp813, His814, and Asp815. Positions 992 to 1005 (IEGKENSLAEDKDG) are enriched in basic and acidic residues. Disordered stretches follow at residues 992–1014 (IEGKENSLAEDKDGRRKGKASIK), 1052–1089 (TGEQLGMSSPRGGRTTSNATSNCQENPCPSKSLSPKQH), 1300–1329 (LESNLPGSPNTSRGWLPKSPTKGEDWETLK), and 1578–1613 (LSSRSQSRVRNIASRAKEKQEANKQKVPNPSNGAGV). The segment covering 1065–1086 (RTTSNATSNCQENPCPSKSLSP) has biased composition (polar residues). Over residues 1592 to 1601 (RAKEKQEANK) the composition is skewed to basic and acidic residues.

It depends on Ca(2+) as a cofactor. Expressed in brain and to a lower extent in lung. In brain, it is found in cerebrum, cerebellum and spinal cord. In embryo expressed in the notochord, developing spinal cord (in a ventral to dorsal gradient), dorsal root ganglia, cerebellum and dermatomyosome.

It localises to the cytoplasm. The protein resides in the membrane. The catalysed reaction is a 1,2-diacyl-sn-glycero-3-phospho-(1D-myo-inositol-4,5-bisphosphate) + H2O = 1D-myo-inositol 1,4,5-trisphosphate + a 1,2-diacyl-sn-glycerol + H(+). In terms of biological role, the production of the second messenger molecules diacylglycerol (DAG) and inositol 1,4,5-trisphosphate (IP3) is mediated by calcium-activated phosphatidylinositol-specific phospholipase C enzymes. In Homo sapiens (Human), this protein is 1-phosphatidylinositol 4,5-bisphosphate phosphodiesterase eta-1.